A 477-amino-acid chain; its full sequence is Glycogen synthase (477 aa).

Lysine 15 contacts ADP-alpha-D-glucose.

Belongs to the glycosyltransferase 1 family. Bacterial/plant glycogen synthase subfamily.

The catalysed reaction is [(1-&gt;4)-alpha-D-glucosyl](n) + ADP-alpha-D-glucose = [(1-&gt;4)-alpha-D-glucosyl](n+1) + ADP + H(+). It functions in the pathway glycan biosynthesis; glycogen biosynthesis. Functionally, synthesizes alpha-1,4-glucan chains using ADP-glucose. The sequence is that of Glycogen synthase from Salmonella typhi.